A 315-amino-acid chain; its full sequence is uncharacterized protein (315 aa).

This is an uncharacterized protein from Homo sapiens (Human).